Reading from the N-terminus, the 433-residue chain is Transcription factor elt-2 (433 aa).

Disordered stretches follow at residues 1-47 (MDNN…ELPR) and 194-235 (GQPP…RQGL). Over residues 27 to 43 (PTQNMDPPEQNNESQLS) the composition is skewed to polar residues. Positions 211 to 234 (AKQSSKKSSSSNRGSNGSASRRQG) are enriched in low complexity. A GATA-type zinc finger spans residues 237–261 (CSNCNGTNTTLWRRNAEGDPVCNAC). The disordered stretch occupies residues 275–332 (SMKKEGALQTRKRKSKSGDSSTPSTSRARERKFERASSSTEKAQRSSNRRAGSAKADR). Polar residues predominate over residues 310-324 (ASSSTEKAQRSSNRR).

Interacts with lag-1. Interacts with pha-4. Interacts with rpt-6. Post-translationally, may be ubiquitinated in response to infection by B.pseudomallei. As to expression, expressed in the intestine.

It localises to the nucleus. Its function is as follows. Transcriptional activator that binds to the consensus sequence 5'-[AT]GATA[AG]-3'. Predominantly directs the transcription of intestinal genes such as ges-1, cpr-6, pho-1, ftn-1, vit-2 and lev-11, and itself. Required for gut-specific differentiation, specifically acting with the GATA region-binding transcription factor elt-7 to control normal gene expression and promote normal formation of the intestine. Regulates intestinal gene expression in response to hypoxia to promote longevity. Modulation of longevity may, in part, be the result of regulation of expression of daf-16 isoforms d and f in the intestine. Regulates tissue specific gene expression at basal levels and in response to bacterial infection in the intestine to control innate immunity. Plays a role in the induction of metal-responsive genes, activating gene expression from zinc-activated promoters and iron-dependent promoters and enhancers. May regulate the expression of genes that control sensitivity to oxidative stress, in a mab-3-dependent manner, and osmotic stress, in conjunction with the GATA region-binding transcription factor elt-3. May play a role in sphingolipid signaling by regulating the expression of the sphingosine-1-phosphate degrading enzyme, sphingosine-1-phosphate lyase. May act with the Notch signaling pathway to promote endodermal gene expression. Has a protective role in response to infection by Gram-negative bacteria such as S.enterica, E.coli, P.aeruginosa and B.pseudomallei, Gram-positive bacterium E.faecalis and fungal pathogen C.neoformans. An association with the 26S proteasome regulatory subunit rpt-6, in part, controls gene expression in response to infection by P.aeruginosa. Regulates gene expression during the recovery phase following a bacterial infection. May act with p38-activated transcription factors to control p38 gene induction in response to bacterial infection. Controls lysosome formation in the intestine by controlling lysosomal gene expression. This is Transcription factor elt-2 from Caenorhabditis elegans.